The following is a 253-amino-acid chain: Protein C1orf43 (253 aa).

The helical transmembrane segment at Val-11–Val-31 threads the bilayer.

It localises to the membrane. The protein localises to the golgi apparatus. The protein resides in the mitochondrion. Its function is as follows. General regulator of phagocytosis. Required to uptake Gram negative bacterium by macrophages. This is Protein C1orf43 (C1orf43) from Homo sapiens (Human).